A 920-amino-acid chain; its full sequence is MAASVENRQFRHEPGLSAAGVVRSFSPNHRRSDSPIRNCNYPAAAREFMTPKKLPPETYDTSDDEEDEADYRDAIKKSNSELESSVFDPRDQGTADQWIERNPSMVRLTGKHPFNSEPPLNKLMQHGFITPDPLHYVRNHGPVPNATWEDWTVEICGLVKRPARFSMTQLVNEFPSREFPVTLVCAGNRRKEQNLTKQTIGFNWGAAGISTSVWKGVPLVHILKRCGIYSRKKGALNVCFEGAEDLPGGGGSKYGTSIKIEMAMDPARDIILAYMQNGEKLSPDHGFPVRMIIPGFIGGRMVKWLKRIIVTTPESESYYHFKDNRVLPSHVDAELANSEGWWYKPEYIINELNINSVITTPCHEEILPINSWTTQRPYTLRGYAYSGGGKKVTRVEVTMDGGETWNVCTLDHKEKPTRYAKYWCWCFWSLEVEVLDLLSAKEIAVRAWDETLNTQPDKLIWNLMGMMNNCWFRVKTNMCKPHKGEIGIVFEHPTQPGNQSGGWMAREKHLEISSELAHPTLKKSVSSPFMNTTSLTFTMSEVKKHNSADSAWIVVHGHIYDCTSFLKDHPGGSDSILLNAGTDCTEEFDAIHSDKAKKLLEEYRVGELITMGYSSDSAASSPNNSVHGATNYLTLHLSLATIKEIAPTRSVALIPKEIAPTRREKIPCKLISKTSVSHDVRLFRFALPSPDQVLGLPVGKHVFVCATIDDKLCMRAYTPTSTIDEVGYFELLVKIYFKGVEPKFPNGGLMSQHLESMELGSSIEIKGPLGHIEYMGRGTFSVHGKQKFARKLAMFAGGTGITPDLSSDASYLKDPEDDTEMYVVYANRTEDDILLREELDAWADKYSDRVKVWYVVAKSIREGWKYSEGFITEDIMREHVPEVSEDTLALACGPPPMIQFAINPNLEKMGYDIKNSLLVF.

A disordered region spans residues 1–69 (MAASVENRQF…DTSDDEEDEA (69 aa)). The segment covering 60–69 (DTSDDEEDEA) has biased composition (acidic residues). Residue cysteine 185 coordinates Mo-molybdopterin. The 76-residue stretch at 534–609 (SLTFTMSEVK…LEEYRVGELI (76 aa)) folds into the Cytochrome b5 heme-binding domain. The heme site is built by histidine 569 and histidine 592. The region spanning 663 to 775 (REKIPCKLIS…KGPLGHIEYM (113 aa)) is the FAD-binding FR-type domain. Residues 715-718 (RAYT), 732-736 (LVKIY), phenylalanine 737, phenylalanine 744, 749-751 (LMS), and threonine 802 each bind FAD.

It belongs to the nitrate reductase family. As to quaternary structure, homodimer. FAD serves as cofactor. Requires heme as cofactor. Mo-molybdopterin is required as a cofactor. In terms of tissue distribution, in cortical cells of roots grown at low nitrate concentrations, in vascular tissues of roots at high nitrate concentrations and in root apex under both conditions.

The enzyme catalyses nitrite + NAD(+) + H2O = nitrate + NADH + H(+). In terms of biological role, nitrate reductase is a key enzyme involved in the first step of nitrate assimilation in plants, fungi and bacteria. The protein is Nitrate reductase [NADH] (NIA) of Cichorium intybus (Chicory).